A 264-amino-acid polypeptide reads, in one-letter code: Nuclear egress protein 1 (264 aa).

The span at 1 to 12 (MTVHKNRFRRSR) shows a compositional bias: basic residues. The interval 1–22 (MTVHKNRFRRSRSLSVTHRIQK) is disordered. Residues 83 to 187 (CLEFSPYANE…HIVFQSRTLH (105 aa)) form a CCCH-type zinc finger.

Belongs to the herpesviridae NEC1 protein family. Forms a heterohexameric complex with NEC2. Interacts with capsid vertex specific component 2/CVC2; this interaction directs the capsid to the host inner nuclear membrane to initiate budding. Post-translationally, phosphorylated at serine residues in the N-terminus. This phosphorylation regulates the localization within the inner nuclear membrane.

The protein localises to the host nucleus inner membrane. In terms of biological role, plays an essential role in virion nuclear egress, the first step of virion release from infected cell. Within the host nucleus, NEC1 interacts with the newly formed capsid through the vertexes and directs it to the inner nuclear membrane by associating with NEC2. Induces the budding of the capsid at the inner nuclear membrane as well as its envelopment into the perinuclear space. There, the NEC1/NEC2 complex promotes the fusion of the enveloped capsid with the outer nuclear membrane and the subsequent release of the viral capsid into the cytoplasm where it will reach the secondary budding sites in the host Golgi or trans-Golgi network. The sequence is that of Nuclear egress protein 1 from Human herpesvirus 6B (HHV-6 variant B).